A 101-amino-acid polypeptide reads, in one-letter code: Small ribosomal subunit protein uS14 (101 aa).

This sequence belongs to the universal ribosomal protein uS14 family. As to quaternary structure, part of the 30S ribosomal subunit. Contacts proteins S3 and S10.

In terms of biological role, binds 16S rRNA, required for the assembly of 30S particles and may also be responsible for determining the conformation of the 16S rRNA at the A site. The polypeptide is Small ribosomal subunit protein uS14 (Bartonella henselae (strain ATCC 49882 / DSM 28221 / CCUG 30454 / Houston 1) (Rochalimaea henselae)).